The primary structure comprises 1853 residues: Cellulosomal-scaffolding protein A (1853 aa).

The signal sequence occupies residues 1–28; that stretch reads MRKVISMLLVVAMLTTIFAAMIPQTVSA. Cohesin domains lie at 29–182 and 183–322; these read ATMT…VPSD and GVVV…VNVG. 2 linker (Pro/Thr-rich) regions span residues 323–363 and 523–559; these read NATP…PANT and GGSV…SDDP. Low complexity predominate over residues 323 to 364; the sequence is NATPTKGATPTNTATPTKSATATPTRPSVPTNTPTNTPANTP. Disordered regions lie at residues 323-367 and 525-559; these read NATP…PVSG and SVVP…SDDP. The 159-residue stretch at 365–523 folds into the CBM3 domain; the sequence is VSGNLKVEFY…GVLVWGKEPG (159 aa). Over residues 525–555 the composition is skewed to low complexity; sequence SVVPSTQPVTTPPATTKPPATTKPPATTIPP. Cohesin domains lie at 560-704, 724-866, 889-1031, 1054-1196, 1219-1361, 1384-1526, and 1548-1690; these read NAIK…NVGD, AVRI…VNVG, and KLTL…VLVT. The Dockerin domain occupies 1785–1852; that stretch reads IMMWVGDIVK…FGATSSDYDA (68 aa).

Post-translationally, O-glycosylated on most but not all Thr residues of the linker units. The reducing sugar is galactopyranose.

Its subcellular location is the secreted. Functionally, acts as a scaffolding protein in the cellulosome. It promotes binding of cellulose to the catalytic domains of the cellulolytic enzymes. In Acetivibrio thermocellus (strain ATCC 27405 / DSM 1237 / JCM 9322 / NBRC 103400 / NCIMB 10682 / NRRL B-4536 / VPI 7372) (Clostridium thermocellum), this protein is Cellulosomal-scaffolding protein A (cipA).